Reading from the N-terminus, the 194-residue chain is Inosine triphosphate pyrophosphatase (194 aa).

10 to 15 contributes to the ITP binding site; sequence TGNANK. Glu41 serves as a coordination point for Mg(2+). Residues Lys54, 72–73, Lys89, 147–150, Lys172, and 177–178 contribute to the ITP site; these read DT, FGWD, and QR.

It belongs to the HAM1 NTPase family. In terms of assembly, homodimer. Requires Mg(2+) as cofactor. It depends on Mn(2+) as a cofactor.

The protein localises to the cytoplasm. It is found in the nucleus. It carries out the reaction ITP + H2O = IMP + diphosphate + H(+). The catalysed reaction is dITP + H2O = dIMP + diphosphate + H(+). It catalyses the reaction XTP + H2O = XMP + diphosphate + H(+). In terms of biological role, pyrophosphatase that hydrolyzes non-canonical purine nucleotides such as inosine triphosphate (ITP), deoxyinosine triphosphate (dITP) or xanthosine 5'-triphosphate (XTP) to their respective monophosphate derivatives. The enzyme does not distinguish between the deoxy- and ribose forms. Probably excludes non-canonical purines from RNA and DNA precursor pools, thus preventing their incorporation into RNA and DNA and avoiding chromosomal lesions. The protein is Inosine triphosphate pyrophosphatase of Kluyveromyces lactis (strain ATCC 8585 / CBS 2359 / DSM 70799 / NBRC 1267 / NRRL Y-1140 / WM37) (Yeast).